Consider the following 187-residue polypeptide: Peptidyl-tRNA hydrolase (187 aa).

Tyr15 provides a ligand contact to tRNA. His20 functions as the Proton acceptor in the catalytic mechanism. Residues Phe65, Asn67, and Asn113 each coordinate tRNA.

It belongs to the PTH family. As to quaternary structure, monomer.

It localises to the cytoplasm. It carries out the reaction an N-acyl-L-alpha-aminoacyl-tRNA + H2O = an N-acyl-L-amino acid + a tRNA + H(+). Its function is as follows. Hydrolyzes ribosome-free peptidyl-tRNAs (with 1 or more amino acids incorporated), which drop off the ribosome during protein synthesis, or as a result of ribosome stalling. Functionally, catalyzes the release of premature peptidyl moieties from peptidyl-tRNA molecules trapped in stalled 50S ribosomal subunits, and thus maintains levels of free tRNAs and 50S ribosomes. This is Peptidyl-tRNA hydrolase from Elusimicrobium minutum (strain Pei191).